The chain runs to 207 residues: Thiamine-phosphate synthase (207 aa).

Residues 37-41 and asparagine 69 each bind 4-amino-2-methyl-5-(diphosphooxymethyl)pyrimidine; that span reads QYRHK. Positions 70 and 89 each coordinate Mg(2+). Residues serine 108 and lysine 138 each contribute to the 4-amino-2-methyl-5-(diphosphooxymethyl)pyrimidine site. Residues glycine 165 and 185–186 each bind 2-[(2R,5Z)-2-carboxy-4-methylthiazol-5(2H)-ylidene]ethyl phosphate; that span reads IS.

This sequence belongs to the thiamine-phosphate synthase family. Mg(2+) serves as cofactor.

The catalysed reaction is 2-[(2R,5Z)-2-carboxy-4-methylthiazol-5(2H)-ylidene]ethyl phosphate + 4-amino-2-methyl-5-(diphosphooxymethyl)pyrimidine + 2 H(+) = thiamine phosphate + CO2 + diphosphate. It catalyses the reaction 2-(2-carboxy-4-methylthiazol-5-yl)ethyl phosphate + 4-amino-2-methyl-5-(diphosphooxymethyl)pyrimidine + 2 H(+) = thiamine phosphate + CO2 + diphosphate. It carries out the reaction 4-methyl-5-(2-phosphooxyethyl)-thiazole + 4-amino-2-methyl-5-(diphosphooxymethyl)pyrimidine + H(+) = thiamine phosphate + diphosphate. The protein operates within cofactor biosynthesis; thiamine diphosphate biosynthesis; thiamine phosphate from 4-amino-2-methyl-5-diphosphomethylpyrimidine and 4-methyl-5-(2-phosphoethyl)-thiazole: step 1/1. Its function is as follows. Condenses 4-methyl-5-(beta-hydroxyethyl)thiazole monophosphate (THZ-P) and 2-methyl-4-amino-5-hydroxymethyl pyrimidine pyrophosphate (HMP-PP) to form thiamine monophosphate (TMP). The protein is Thiamine-phosphate synthase of Janthinobacterium sp. (strain Marseille) (Minibacterium massiliensis).